Reading from the N-terminus, the 386-residue chain is MTTISDLPYDLLPEILSRLPTKSIPKLKTTCKKWYALFKDPKFVEKKLGKAARETVFLMNHEVNSISVDIHGIPKGYSVSMDFTGTLTIPEGSDLEIFRIHHCNGLFLCATMNCRLVVWNPCTGQITWIIPRTRYDSDDIYALGCGDDKSSSLHSYKILRCCDDNQKKPVSEIYDFSSSSWRVLDGVTANCFIECNGVALKESAYWYASDKRETPKGKFILRFDFATERFARLCLPLNFQRDRDNKSVVVSVVGEEKLALLQQFDHRVHGLKYSKIKIWVTDTKIGEGKDLSWSNILVEELADDNLPSVTSFLLDEEKKVAVCSDAVCSDTDTEDEDRRRIYIVGEGVDEFVYDEVSTETSHNWPFLVSYVPNLVHIEKDAPIVEV.

The region spanning 1–48 (MTTISDLPYDLLPEILSRLPTKSIPKLKTTCKKWYALFKDPKFVEKKL) is the F-box domain. 2 Kelch repeats span residues 155 to 203 (SYKI…LKES) and 340 to 386 (RIYI…IVEV).

The sequence is that of Putative F-box/kelch-repeat protein At3g17280 from Arabidopsis thaliana (Mouse-ear cress).